Here is a 602-residue protein sequence, read N- to C-terminus: Beta-(1--&gt;2)glucan export ATP-binding/permease protein NdvA (602 aa).

Residues 21 to 311 (GWTLAVANLL…VVSFVNSLMM (291 aa)) form the ABC transmembrane type-1 domain. The next 6 membrane-spanning stretches (helical) occupy residues 22 to 42 (WTLAVANLLLATAQFAEPVLF), 68 to 88 (LLAAWVGFGLFTILCSATVAL), 146 to 166 (EHFAAILSLVVLLPLSLYINW), 167 to 187 (RLAILLFALCGVFTVLTTLVV), 254 to 274 (VITRASTTITVLAIFSLGIAL), and 276 to 296 (QQGLTSVGEIVMFVSFATLLI). Residues 345 to 579 (VEFLDVSFSY…RGRFAELARA (235 aa)) enclose the ABC transporter domain. 378-385 (GATGAGKS) provides a ligand contact to ATP.

Belongs to the ABC transporter superfamily. Beta-(1--&gt;2)glucan exporter (TC 3.A.1.108.1) family. Homodimer.

The protein resides in the cell inner membrane. It catalyses the reaction [(1-&gt;2)-beta-D-glucosyl](n)(in) + ATP + H2O = [(1-&gt;2)-beta-D-glucosyl](n)(out) + ADP + phosphate + H(+). Functionally, involved in beta-(1--&gt;2)glucan export. Transmembrane domains (TMD) form a pore in the inner membrane and the ATP-binding domain (NBD) is responsible for energy generation. The chain is Beta-(1--&gt;2)glucan export ATP-binding/permease protein NdvA from Rhodopseudomonas palustris (strain BisB5).